We begin with the raw amino-acid sequence, 101 residues long: Urease subunit beta (101 aa).

Belongs to the urease beta subunit family. Heterotrimer of UreA (gamma), UreB (beta) and UreC (alpha) subunits. Three heterotrimers associate to form the active enzyme.

It is found in the cytoplasm. The catalysed reaction is urea + 2 H2O + H(+) = hydrogencarbonate + 2 NH4(+). The protein operates within nitrogen metabolism; urea degradation; CO(2) and NH(3) from urea (urease route): step 1/1. The polypeptide is Urease subunit beta (Cupriavidus metallidurans (strain ATCC 43123 / DSM 2839 / NBRC 102507 / CH34) (Ralstonia metallidurans)).